The following is a 98-amino-acid chain: Large ribosomal subunit protein bL27 (98 aa).

Positions 1 to 11 are enriched in polar residues; the sequence is MASKASGGSTR. The tract at residues 1 to 20 is disordered; the sequence is MASKASGGSTRNGRDSISKR.

It belongs to the bacterial ribosomal protein bL27 family.

This Aquifex aeolicus (strain VF5) protein is Large ribosomal subunit protein bL27.